The chain runs to 381 residues: Adaptive-response sensory kinase SasA (381 aa).

The Histidine kinase domain occupies 154-367 (MVAHELRTPL…CFYFTVPVWD (214 aa)). Phosphohistidine; by autocatalysis is present on H157.

Homooligomerizes. Interacts with KaiC. Participates in the KaiBC complex, whose core is composed of a KaiC homohexamer and 6 KaiB.

The catalysed reaction is ATP + protein L-histidine = ADP + protein N-phospho-L-histidine.. Member of the two-component regulatory system SasA/RpaA involved in genome-wide circadian gene expression. One of several clock output pathways. Participates in the Kai clock protein complex, the main circadian regulator in cyanobacteria, via its interaction with KaiC. KaiC enhances the autophosphorylation activity of SasA, which then transfers its phosphate group to RpaA to activate it. In addition to its output function, recruits fold-shifted KaiB (KaiB(fs)) to KaiC to cooperatively form the KaiB(6):KaiC(6) complex (independent of SasA kinase activity). Required for robustness of the circadian rhythm of gene expression and is involved in clock output, also required for adaptation to light/dark cycles. The chain is Adaptive-response sensory kinase SasA from Prochlorococcus marinus (strain SARG / CCMP1375 / SS120).